Reading from the N-terminus, the 420-residue chain is Serine--tRNA ligase (420 aa).

228-230 (TAE) lines the L-serine pocket. 259–261 (RSE) is a binding site for ATP. Residue Glu-282 participates in L-serine binding. 346–349 (EISS) is a binding site for ATP. Ser-382 is an L-serine binding site.

This sequence belongs to the class-II aminoacyl-tRNA synthetase family. Type-1 seryl-tRNA synthetase subfamily. Homodimer. The tRNA molecule binds across the dimer.

Its subcellular location is the cytoplasm. It catalyses the reaction tRNA(Ser) + L-serine + ATP = L-seryl-tRNA(Ser) + AMP + diphosphate + H(+). The catalysed reaction is tRNA(Sec) + L-serine + ATP = L-seryl-tRNA(Sec) + AMP + diphosphate + H(+). It participates in aminoacyl-tRNA biosynthesis; selenocysteinyl-tRNA(Sec) biosynthesis; L-seryl-tRNA(Sec) from L-serine and tRNA(Sec): step 1/1. Functionally, catalyzes the attachment of serine to tRNA(Ser). Is also able to aminoacylate tRNA(Sec) with serine, to form the misacylated tRNA L-seryl-tRNA(Sec), which will be further converted into selenocysteinyl-tRNA(Sec). In Mycoplasmoides gallisepticum (strain R(low / passage 15 / clone 2)) (Mycoplasma gallisepticum), this protein is Serine--tRNA ligase.